We begin with the raw amino-acid sequence, 361 residues long: Biotin synthase (361 aa).

The Radical SAM core domain occupies 63–290 (NTVQLSTLLS…RAMVRLSAGR (228 aa)). Positions 78, 82, and 85 each coordinate [4Fe-4S] cluster. [2Fe-2S] cluster is bound by residues cysteine 122, cysteine 153, cysteine 213, and arginine 285.

This sequence belongs to the radical SAM superfamily. Biotin synthase family. Homodimer. Requires [4Fe-4S] cluster as cofactor. [2Fe-2S] cluster serves as cofactor.

It carries out the reaction (4R,5S)-dethiobiotin + (sulfur carrier)-SH + 2 reduced [2Fe-2S]-[ferredoxin] + 2 S-adenosyl-L-methionine = (sulfur carrier)-H + biotin + 2 5'-deoxyadenosine + 2 L-methionine + 2 oxidized [2Fe-2S]-[ferredoxin]. Its pathway is cofactor biosynthesis; biotin biosynthesis; biotin from 7,8-diaminononanoate: step 2/2. Catalyzes the conversion of dethiobiotin (DTB) to biotin by the insertion of a sulfur atom into dethiobiotin via a radical-based mechanism. In Paraburkholderia phytofirmans (strain DSM 17436 / LMG 22146 / PsJN) (Burkholderia phytofirmans), this protein is Biotin synthase.